The primary structure comprises 262 residues: Probable proteasome subunit beta type-7 (262 aa).

The protein belongs to the peptidase T1B family. The 26S proteasome consists of a 20S proteasome core and two 19S regulatory subunits. The 20S proteasome core is composed of 28 subunits that are arranged in four stacked rings, resulting in a barrel-shaped structure. The two end rings are each formed by seven alpha subunits, and the two central rings are each formed by seven beta subunits. The catalytic chamber with the active sites is on the inside of the barrel.

It is found in the cytoplasm. Its subcellular location is the nucleus. Non-catalytic component of the proteasome, a multicatalytic proteinase complex which is characterized by its ability to cleave peptides with Arg, Phe, Tyr, Leu, and Glu adjacent to the leaving group at neutral or slightly basic pH. The proteasome has an ATP-dependent proteolytic activity. This chain is Probable proteasome subunit beta type-7, found in Schizosaccharomyces pombe (strain 972 / ATCC 24843) (Fission yeast).